The sequence spans 68 residues: Negative regulatory protein YxlD (68 aa).

2 helical membrane-spanning segments follow: residues 5-25 and 37-57; these read EIII…FLFI and WGIV…FFVI.

Its subcellular location is the cell membrane. Together with YxlE, is important for negative regulation of sigma Y activity, being the major negative regulator. The polypeptide is Negative regulatory protein YxlD (yxlD) (Bacillus subtilis (strain 168)).